We begin with the raw amino-acid sequence, 439 residues long: Glutamyl-tRNA reductase (439 aa).

Substrate contacts are provided by residues 48–51 (TCNR), serine 107, 112–114 (EPQ), and glutamine 118. The active-site Nucleophile is the cysteine 49. Residue 187 to 192 (GAGEMA) participates in NADP(+) binding.

This sequence belongs to the glutamyl-tRNA reductase family. In terms of assembly, homodimer.

The catalysed reaction is (S)-4-amino-5-oxopentanoate + tRNA(Glu) + NADP(+) = L-glutamyl-tRNA(Glu) + NADPH + H(+). The protein operates within porphyrin-containing compound metabolism; protoporphyrin-IX biosynthesis; 5-aminolevulinate from L-glutamyl-tRNA(Glu): step 1/2. In terms of biological role, catalyzes the NADPH-dependent reduction of glutamyl-tRNA(Glu) to glutamate 1-semialdehyde (GSA). The sequence is that of Glutamyl-tRNA reductase from Maridesulfovibrio salexigens (strain ATCC 14822 / DSM 2638 / NCIMB 8403 / VKM B-1763) (Desulfovibrio salexigens).